Here is a 319-residue protein sequence, read N- to C-terminus: Taste receptor type 2 member 7 (319 aa).

Topologically, residues 1–9 (MADKVQTTL) are extracellular. A helical transmembrane segment spans residues 10–30 (LFLAVGEFSVGILGNAFIGLV). Residues 31–55 (NCMDWVKKRKIASIDLILTSLAISR) lie on the Cytoplasmic side of the membrane. A helical transmembrane segment spans residues 56–76 (ICLLCVILLDCFILVLYPDVY). At 77–94 (ATGKEMRIIDFFWTLTNH) the chain is on the extracellular side. A helical membrane pass occupies residues 95-115 (LSIWFATCLSIYYXFRIANFF). Residues 116-128 (HPLFLWMKWRIDR) lie on the Cytoplasmic side of the membrane. A helical membrane pass occupies residues 129-149 (VISWILLGCVVLSVFISLPAT). The Extracellular segment spans residues 150 to 187 (ENLNADFRFCVKAKRKTNLTWSCRVNKTQHASTKLFLN). 2 N-linked (GlcNAc...) asparagine glycosylation sites follow: asparagine 167 and asparagine 175. A helical membrane pass occupies residues 188-208 (LATLLPFCVCLMSFFLLILSL). Topologically, residues 209 to 235 (RRHIRRMQLSATGCRDPSTEAHVRALK) are cytoplasmic. A helical membrane pass occupies residues 236–256 (AVISFLLLFIAYYLSFLVATS). At 257–266 (SYFMPETELA) the chain is on the extracellular side. The chain crosses the membrane as a helical span at residues 267-287 (VIFGESIALIYPSSHSFILIL). Residues 288-319 (GNNKLRHASLKVIWKVMSILKGRKFQQHKQIG) are Cytoplasmic-facing.

It belongs to the G-protein coupled receptor T2R family.

Its subcellular location is the membrane. Gustducin-coupled receptor implicated in the perception of bitter compounds in the oral cavity and the gastrointestinal tract. Signals through PLCB2 and the calcium-regulated cation channel TRPM5. The protein is Taste receptor type 2 member 7 (TAS2R7) of Pan troglodytes (Chimpanzee).